The following is a 329-amino-acid chain: MQGSVTEFLKPRLVDIEQVNPTRAKVTLEPLERGFGHTLGNALRRILLSSMPGCAVTEVEIDGVLHEYSSKEGVQEDILEILLNLKGLAVTIEGKDEAMLTLSKSGTGPVTAADITHDGDVTIMNPDHVICHLTGNNDISMRIRVERGRGYVPASARAQTEDDDRPIGRLLVDASFSPVARIAYNVEAARVEQRTDLDKLVIDMTTNGTIDPEEAIRRSATILAEQLDAFVELRDVTEPEQKEEKPEFDPILLRPVDDLELTVRSANCLKAEAIHYIGDLVQRTEVELLKTPNLGKKSLTEIKDVLASRGLSLGMRLENWPPASLVDDL.

The segment at 1-234 is alpha N-terminal domain (alpha-NTD); the sequence is MQGSVTEFLK…EQLDAFVELR (234 aa). Residues 248 to 329 form an alpha C-terminal domain (alpha-CTD) region; sequence FDPILLRPVD…WPPASLVDDL (82 aa).

The protein belongs to the RNA polymerase alpha chain family. As to quaternary structure, homodimer. The RNAP catalytic core consists of 2 alpha, 1 beta, 1 beta' and 1 omega subunit. When a sigma factor is associated with the core the holoenzyme is formed, which can initiate transcription.

It carries out the reaction RNA(n) + a ribonucleoside 5'-triphosphate = RNA(n+1) + diphosphate. Its function is as follows. DNA-dependent RNA polymerase catalyzes the transcription of DNA into RNA using the four ribonucleoside triphosphates as substrates. In Shewanella denitrificans (strain OS217 / ATCC BAA-1090 / DSM 15013), this protein is DNA-directed RNA polymerase subunit alpha.